The chain runs to 338 residues: Large ribosomal subunit protein uL3 (338 aa).

Residues 228–237 (HKHRKGHRRT) show a composition bias toward basic residues. Residues 228 to 255 (HKHRKGHRRTGTIGPQAPALMFTQPRPG) form a disordered region.

This sequence belongs to the universal ribosomal protein uL3 family. In terms of assembly, part of the 50S ribosomal subunit. Forms a cluster with proteins L14 and L24e.

One of the primary rRNA binding proteins, it binds directly near the 3'-end of the 23S rRNA, where it nucleates assembly of the 50S subunit. The protein is Large ribosomal subunit protein uL3 of Pyrobaculum calidifontis (strain DSM 21063 / JCM 11548 / VA1).